Consider the following 364-residue polypeptide: Aminomethyltransferase (364 aa).

Belongs to the GcvT family. As to quaternary structure, the glycine cleavage system is composed of four proteins: P, T, L and H.

The enzyme catalyses N(6)-[(R)-S(8)-aminomethyldihydrolipoyl]-L-lysyl-[protein] + (6S)-5,6,7,8-tetrahydrofolate = N(6)-[(R)-dihydrolipoyl]-L-lysyl-[protein] + (6R)-5,10-methylene-5,6,7,8-tetrahydrofolate + NH4(+). Functionally, the glycine cleavage system catalyzes the degradation of glycine. The chain is Aminomethyltransferase from Geobacillus kaustophilus (strain HTA426).